The sequence spans 431 residues: Adenylosuccinate synthetase (431 aa).

GTP-binding positions include 13–19 (GDEGKGK) and 41–43 (GHT). Catalysis depends on Asp-14, which acts as the Proton acceptor. Mg(2+)-binding residues include Asp-14 and Gly-41. IMP is bound by residues 14–17 (DEGK), 39–42 (NAGH), Thr-130, Arg-144, Gln-225, Thr-240, and Arg-304. Catalysis depends on His-42, which acts as the Proton donor. Substrate is bound at residue 300–306 (ATTGRAR). Residues Arg-306, 332-334 (KLD), and 414-416 (STG) contribute to the GTP site.

The protein belongs to the adenylosuccinate synthetase family. In terms of assembly, homodimer. Mg(2+) serves as cofactor.

The protein resides in the cytoplasm. The enzyme catalyses IMP + L-aspartate + GTP = N(6)-(1,2-dicarboxyethyl)-AMP + GDP + phosphate + 2 H(+). It functions in the pathway purine metabolism; AMP biosynthesis via de novo pathway; AMP from IMP: step 1/2. Plays an important role in the de novo pathway of purine nucleotide biosynthesis. Catalyzes the first committed step in the biosynthesis of AMP from IMP. This is Adenylosuccinate synthetase from Chromohalobacter salexigens (strain ATCC BAA-138 / DSM 3043 / CIP 106854 / NCIMB 13768 / 1H11).